The sequence spans 313 residues: Ribosomal RNA small subunit methyltransferase H (313 aa).

S-adenosyl-L-methionine is bound by residues 35-37, D55, F79, D101, and Q108; that span reads GGH.

This sequence belongs to the methyltransferase superfamily. RsmH family.

It localises to the cytoplasm. The catalysed reaction is cytidine(1402) in 16S rRNA + S-adenosyl-L-methionine = N(4)-methylcytidine(1402) in 16S rRNA + S-adenosyl-L-homocysteine + H(+). In terms of biological role, specifically methylates the N4 position of cytidine in position 1402 (C1402) of 16S rRNA. The protein is Ribosomal RNA small subunit methyltransferase H of Escherichia coli O139:H28 (strain E24377A / ETEC).